Here is a 241-residue protein sequence, read N- to C-terminus: Large ribosomal subunit protein uL3 (241 aa).

2 disordered regions span residues 140–168 (SHRSIGSTGGRQDPGKTFKNKKMPGHMGD) and 216–241 (APKPGAFKLNGSEAAPAAEAVNEEGA). Gln-151 is modified (N5-methylglutamine).

The protein belongs to the universal ribosomal protein uL3 family. In terms of assembly, part of the 50S ribosomal subunit. Forms a cluster with proteins L14 and L19. In terms of processing, methylated by PrmB.

One of the primary rRNA binding proteins, it binds directly near the 3'-end of the 23S rRNA, where it nucleates assembly of the 50S subunit. In Xanthobacter autotrophicus (strain ATCC BAA-1158 / Py2), this protein is Large ribosomal subunit protein uL3.